Here is a 342-residue protein sequence, read N- to C-terminus: Photosystem II D2 protein (342 aa).

The Cytoplasmic segment spans residues 1–29 (ERGWFDILDDWLKRDRFVFVGWSGILLFP). A helical transmembrane segment spans residues 30-50 (CAYLALGGWLTGTTFVTSWYT). Topologically, residues 51-113 (HGLASSYLEG…IALHGAFGLI (63 aa)) are lumenal. Histidine 107 provides a ligand contact to chlorophyll a. Residues 114 to 130 (GFMLRQFEIARLVGVRP) form a helical membrane-spanning segment. Residues glutamine 119 and asparagine 132 each coordinate pheophytin a. Residues 131–141 (YNAIAFSAPIA) are Cytoplasmic-facing. The helical transmembrane segment at 142 to 155 (VFVSVFLIYPLGQS) threads the bilayer. At 156-196 (SWFFAPSFGVAAIFRFLLFFQGFHNWTLNPFHMMGVAGVLG) the chain is on the lumenal side. Position 187 (histidine 187) interacts with chlorophyll a. The chain crosses the membrane as a helical span at residues 197 to 217 (GALLCAIHGATVENTLFQDGE). A plastoquinone contacts are provided by histidine 204 and phenylalanine 251. Histidine 204 lines the Fe cation pocket. The Cytoplasmic segment spans residues 218–267 (GASTFRAFNPTQAEETYSMVTANRFWSQIFGIAFSNKRWLHFFMLFVPVT). Histidine 258 lines the Fe cation pocket. A helical membrane pass occupies residues 268–284 (GLWMSAIGVVGLALNLR). Over 285 to 342 (SYDFISQEIRAAEDPEFETFYTKNLLLNEGIRAWMAPQDQPHENFVFPEEVLPRGNAL) the chain is Lumenal.

The protein belongs to the reaction center PufL/M/PsbA/D family. In terms of assembly, PSII is composed of 1 copy each of membrane proteins PsbA, PsbB, PsbC, PsbD, PsbE, PsbF, PsbH, PsbI, PsbJ, PsbK, PsbL, PsbM, PsbT, PsbX, PsbY, PsbZ, Psb30/Ycf12, peripheral proteins PsbO, CyanoQ (PsbQ), PsbU, PsbV and a large number of cofactors. It forms dimeric complexes. The cofactor is The D1/D2 heterodimer binds P680, chlorophylls that are the primary electron donor of PSII, and subsequent electron acceptors. It shares a non-heme iron and each subunit binds pheophytin, quinone, additional chlorophylls, carotenoids and lipids. There is also a Cl(-1) ion associated with D1 and D2, which is required for oxygen evolution. The PSII complex binds additional chlorophylls, carotenoids and specific lipids..

The protein resides in the cellular thylakoid membrane. The catalysed reaction is 2 a plastoquinone + 4 hnu + 2 H2O = 2 a plastoquinol + O2. Its function is as follows. Photosystem II (PSII) is a light-driven water:plastoquinone oxidoreductase that uses light energy to abstract electrons from H(2)O, generating O(2) and a proton gradient subsequently used for ATP formation. It consists of a core antenna complex that captures photons, and an electron transfer chain that converts photonic excitation into a charge separation. The D1/D2 (PsbA/PsbD) reaction center heterodimer binds P680, the primary electron donor of PSII as well as several subsequent electron acceptors. D2 is needed for assembly of a stable PSII complex. The sequence is that of Photosystem II D2 protein from Thermostichus vulcanus (Synechococcus vulcanus).